The following is a 220-amino-acid chain: Iron-sulfur cluster repair protein YtfE (220 aa).

This sequence belongs to the RIC family. YtfE subfamily. Homodimer.

It localises to the cytoplasm. In terms of biological role, di-iron-containing protein involved in the repair of iron-sulfur clusters damaged by oxidative and nitrosative stress conditions. This chain is Iron-sulfur cluster repair protein YtfE, found in Salmonella typhimurium (strain LT2 / SGSC1412 / ATCC 700720).